The primary structure comprises 224 residues: UPF0758 protein PM1152 (224 aa).

The region spanning 102–224 (AFKNSENVRF…YYSFAENRLL (123 aa)) is the MPN domain. 3 residues coordinate Zn(2+): H173, H175, and D186. The short motif at 173–186 (HNHPSGNPEPSASD) is the JAMM motif element.

It belongs to the UPF0758 family.

The protein is UPF0758 protein PM1152 of Pasteurella multocida (strain Pm70).